Consider the following 474-residue polypeptide: MVFGNEMCDETPHPGECKTLLIKHKPIRSTTQFLQVSVERTLDGAVKAKSDTYFLEPQFGSKQAWEECMDLYEQTIHRLNESVLCPKNVCSRSDVQAWLSTALTNLDTCQEEMSELGVSSHSLESITIDVINTLAINKRMEQNGKEFGISKITMKTLSIGEKVDVVVAQDGSGDYKTIQEAVNGAGERLKGSPRYVIHVKQGVYEEYVNVGIKSNNIMITGDGIGKTIITGDKSKGRGFSTYKSATFVAEGDGFVGRDITIRNTAGPENHQAVALRSNSDMSVFYRCSIEGYQDTLYVHSGRQFFRECDIYGTVDFIFGNAAAVLQNCRIFARNPPNGVNTITAQSRFNPNQTTGIVIHNSVVKGAPGVQLGGVKTYLGRPWRSYARTVVIGTYLDTLIEPNGWIDWDNVTALSTLYYGEYQNSGPGSGTENRVDWAGFHVISDIQEAREFTLPKFIDSASWLPPTKVPFTINL.

The pectinesterase inhibitor 38 stretch occupies residues 1–130 (MVFGNEMCDE…HSLESITIDV (130 aa)). An N-linked (GlcNAc...) asparagine glycan is attached at Asn-80. The pectinesterase 38 stretch occupies residues 164-461 (DVVVAQDGSG…TLPKFIDSAS (298 aa)). The substrate site is built by Thr-241 and Gln-271. The active-site Proton donor; for pectinesterase activity is the Asp-294. An intrachain disulfide couples Cys-308 to Cys-328. Catalysis depends on Asp-315, which acts as the Nucleophile; for pectinesterase activity. Asn-351 carries N-linked (GlcNAc...) asparagine glycosylation. Substrate is bound by residues Arg-380 and Trp-382. Residue Asn-409 is glycosylated (N-linked (GlcNAc...) asparagine).

The protein in the N-terminal section; belongs to the PMEI family. This sequence in the C-terminal section; belongs to the pectinesterase family.

It localises to the secreted. It is found in the cell wall. It catalyses the reaction [(1-&gt;4)-alpha-D-galacturonosyl methyl ester](n) + n H2O = [(1-&gt;4)-alpha-D-galacturonosyl](n) + n methanol + n H(+). It participates in glycan metabolism; pectin degradation; 2-dehydro-3-deoxy-D-gluconate from pectin: step 1/5. Its function is as follows. Acts in the modification of cell walls via demethylesterification of cell wall pectin. This is Putative pectinesterase/pectinesterase inhibitor 38 (PME38) from Arabidopsis thaliana (Mouse-ear cress).